The chain runs to 57 residues: MAVPKRKMSRSNTRHRRSQWKAAVPTLVACERCHEPKLQHIACPACGTYNKRQVLEV.

This sequence belongs to the bacterial ribosomal protein bL32 family.

This Streptomyces coelicolor (strain ATCC BAA-471 / A3(2) / M145) protein is Large ribosomal subunit protein bL32A (rpmF1).